The chain runs to 291 residues: tRNA pseudouridine synthase B (291 aa).

The Nucleophile role is filled by aspartate 41.

This sequence belongs to the pseudouridine synthase TruB family. Type 1 subfamily.

It carries out the reaction uridine(55) in tRNA = pseudouridine(55) in tRNA. Responsible for synthesis of pseudouridine from uracil-55 in the psi GC loop of transfer RNAs. This chain is tRNA pseudouridine synthase B, found in Parasynechococcus marenigrum (strain WH8102).